Consider the following 556-residue polypeptide: Thermosome subunit beta (556 aa).

Residues 530–556 (LSTDKGDDDGGAGGMGGGMGGGMGGMM) form a disordered region. The segment covering 540–556 (GAGGMGGGMGGGMGGMM) has biased composition (gly residues).

This sequence belongs to the TCP-1 chaperonin family. As to quaternary structure, forms an oligomeric complex of eight-membered rings.

Functionally, molecular chaperone; binds unfolded polypeptides in vitro, and has a weak ATPase activity. This chain is Thermosome subunit beta (thsB), found in Halobacterium salinarum (strain ATCC 700922 / JCM 11081 / NRC-1) (Halobacterium halobium).